Here is a 183-residue protein sequence, read N- to C-terminus: TATA box-binding protein-like 1 (183 aa).

The protein belongs to the TBP family. As to quaternary structure, binds TFIIA and TFIIB. Present in the brain, heart, liver and gizzard.

Its subcellular location is the cytoplasm. It is found in the nucleus. In terms of biological role, part of a specialized transcription system that mediates the transcription of most ribosomal proteins through the 5'-TCT-3' motif which is a core promoter element at these genes. Seems to also mediate the transcription of NF1. Does not bind the TATA box. This chain is TATA box-binding protein-like 1 (TBPL1), found in Gallus gallus (Chicken).